We begin with the raw amino-acid sequence, 360 residues long: Phosphoserine aminotransferase (360 aa).

Residue Arg41 participates in L-glutamate binding. The pyridoxal 5'-phosphate site is built by Trp101, Thr152, Asp172, and Gln195. Lys196 bears the N6-(pyridoxal phosphate)lysine mark. 237-238 contributes to the pyridoxal 5'-phosphate binding site; the sequence is NT.

This sequence belongs to the class-V pyridoxal-phosphate-dependent aminotransferase family. SerC subfamily. Homodimer. Requires pyridoxal 5'-phosphate as cofactor.

It localises to the cytoplasm. It carries out the reaction O-phospho-L-serine + 2-oxoglutarate = 3-phosphooxypyruvate + L-glutamate. The catalysed reaction is 4-(phosphooxy)-L-threonine + 2-oxoglutarate = (R)-3-hydroxy-2-oxo-4-phosphooxybutanoate + L-glutamate. It functions in the pathway amino-acid biosynthesis; L-serine biosynthesis; L-serine from 3-phospho-D-glycerate: step 2/3. The protein operates within cofactor biosynthesis; pyridoxine 5'-phosphate biosynthesis; pyridoxine 5'-phosphate from D-erythrose 4-phosphate: step 3/5. Catalyzes the reversible conversion of 3-phosphohydroxypyruvate to phosphoserine and of 3-hydroxy-2-oxo-4-phosphonooxybutanoate to phosphohydroxythreonine. The chain is Phosphoserine aminotransferase from Burkholderia vietnamiensis (strain G4 / LMG 22486) (Burkholderia cepacia (strain R1808)).